Reading from the N-terminus, the 378-residue chain is MRVLGLMSGTSADGIDAVLVDFTGDPSKPKWQILNTFSYEYPSSIREKIIQVGQGLKISSKDWLELAEEITELNAFAARTCDPDSTAEVVGCHGQTLFHRSVKKSKRGGSLQILLGPLLANLLDQIVIYDFRSKDIASGGHGAPLVALVDEALVGRLYGWRGVLNLGGIANLTIIPPKTGIDKTSQCLGWDCGPANSLVDLAVKESTNSSLTFDENGSLASLGIPKLEIIDKWLRDPFFYLEPPRSTGREQFGFQYLQKRKKELGDISKEDLISTLTTFTASIISQDLDNLFKFKQIRLIELLVAGGGSKNLFLMRQLQKQCCGVHVRPINEIGVPSQYREALVFATLSWWNFLGKKVNPKYITGAKKPILYGVRVDP.

Position 9 to 16 (9 to 16) interacts with ATP; sequence GTSADGID.

This sequence belongs to the anhydro-N-acetylmuramic acid kinase family.

The catalysed reaction is 1,6-anhydro-N-acetyl-beta-muramate + ATP + H2O = N-acetyl-D-muramate 6-phosphate + ADP + H(+). It participates in amino-sugar metabolism; 1,6-anhydro-N-acetylmuramate degradation. It functions in the pathway cell wall biogenesis; peptidoglycan recycling. Catalyzes the specific phosphorylation of 1,6-anhydro-N-acetylmuramic acid (anhMurNAc) with the simultaneous cleavage of the 1,6-anhydro ring, generating MurNAc-6-P. Is required for the utilization of anhMurNAc either imported from the medium or derived from its own cell wall murein, and thus plays a role in cell wall recycling. The sequence is that of Anhydro-N-acetylmuramic acid kinase from Prochlorococcus marinus (strain NATL1A).